The primary structure comprises 134 residues: Small ribosomal subunit protein uS9 (134 aa).

Residues 109-134 form a disordered region; that stretch reads DARRTEPHKPSKSSKGPRAKRQKSYR. The segment covering 118 to 134 has biased composition (basic residues); it reads PSKSSKGPRAKRQKSYR.

The protein belongs to the universal ribosomal protein uS9 family.

This Methanococcus maripaludis (strain C5 / ATCC BAA-1333) protein is Small ribosomal subunit protein uS9.